Consider the following 732-residue polypeptide: Elongation factor 2 (732 aa).

The region spanning 19 to 260 (ERIRNIGIAA…MVVKHLPNPI (242 aa)) is the tr-type G domain. GTP contacts are provided by residues 28 to 35 (AHIDHGKT), 94 to 98 (DTPGH), and 148 to 151 (NKVD). Diphthamide is present on histidine 597.

This sequence belongs to the TRAFAC class translation factor GTPase superfamily. Classic translation factor GTPase family. EF-G/EF-2 subfamily.

Its subcellular location is the cytoplasm. Catalyzes the GTP-dependent ribosomal translocation step during translation elongation. During this step, the ribosome changes from the pre-translocational (PRE) to the post-translocational (POST) state as the newly formed A-site-bound peptidyl-tRNA and P-site-bound deacylated tRNA move to the P and E sites, respectively. Catalyzes the coordinated movement of the two tRNA molecules, the mRNA and conformational changes in the ribosome. This chain is Elongation factor 2 (fusA), found in Pyrococcus abyssi (strain GE5 / Orsay).